Reading from the N-terminus, the 426-residue chain is Enolase (426 aa).

Residue Gln162 participates in (2R)-2-phosphoglycerate binding. Glu204 functions as the Proton donor in the catalytic mechanism. The Mg(2+) site is built by Asp241, Glu288, and Asp315. (2R)-2-phosphoglycerate is bound by residues Lys340, Arg369, Ser370, and Lys391. Lys340 functions as the Proton acceptor in the catalytic mechanism.

It belongs to the enolase family. Requires Mg(2+) as cofactor.

It is found in the cytoplasm. The protein resides in the secreted. Its subcellular location is the cell surface. It catalyses the reaction (2R)-2-phosphoglycerate = phosphoenolpyruvate + H2O. It functions in the pathway carbohydrate degradation; glycolysis; pyruvate from D-glyceraldehyde 3-phosphate: step 4/5. Catalyzes the reversible conversion of 2-phosphoglycerate (2-PG) into phosphoenolpyruvate (PEP). It is essential for the degradation of carbohydrates via glycolysis. This is Enolase from Bacteroides thetaiotaomicron (strain ATCC 29148 / DSM 2079 / JCM 5827 / CCUG 10774 / NCTC 10582 / VPI-5482 / E50).